The primary structure comprises 739 residues: Interleukin-17 receptor D (739 aa).

Residues 1–16 (MAPWLQLCSVFFTVNA) form the signal peptide. At 17-299 (CLNGSQLAVA…VHSPWAGPIR (283 aa)) the chain is on the extracellular side. Residues asparagine 19, asparagine 55, asparagine 62, asparagine 80, asparagine 137, asparagine 171, asparagine 206, and asparagine 277 are each glycosylated (N-linked (GlcNAc...) asparagine). The chain crosses the membrane as a helical span at residues 300–320 (AVAITVPLVVISAFATLFTVM). Over 321–739 (CRKKQQENIY…TDELHAVAPL (419 aa)) the chain is Cytoplasmic. The region spanning 355–509 (RPKVFLCYSS…LMDNLPQLCS (155 aa)) is the SEFIR domain. Disordered stretches follow at residues 614–635 (GPAD…EARP) and 650–719 (VKAG…SSGS). Residues 667-702 (SSVPSSELSLPLMEGLSTDQTETSSLTESVSSSSGL) are compositionally biased toward low complexity.

As to quaternary structure, interacts with MAP3K7. Self-associates. Interacts with FGFR1, FGFR2 and phosphorylated MAP2K1 or MAP2K2. Associates with a MAP2K1/2-MAPK1/3 complex. Expressed in umbilical vein endothelial cells and in several highly vascularized tissues such as kidney, colon, skeletal muscle, heart and small intestine. Highly expressed in ductal epithelial cells of salivary glands, seminal vesicles and the collecting tubules of the kidney. Isoform 1 is also highly expressed in both fetal and adult brain, pituitary, tonsils, spleen, adenoids, fetal kidney, liver, testes and ovary. Isoform 1 is also expressed at moderate levels in primary aortic endothelial cells and adrenal medulla, and at low levels in adrenal cortex. Isoform 4 is specifically and highly expressed in pituitary, fetal brain and umbilical vein endothelial cells.

It is found in the golgi apparatus membrane. The protein localises to the cell membrane. It localises to the cytoplasm. Functionally, feedback inhibitor of fibroblast growth factor mediated Ras-MAPK signaling and ERK activation. Regulates the nuclear ERK signaling pathway by spatially blocking nuclear translocation of activated ERK without inhibiting cytoplasmic phosphorylation of ERK. Mediates JNK activation and may be involved in apoptosis. May inhibit FGF-induced FGFR1 tyrosine phosphorylation. Might have a role in the early stages of fate specification of GnRH-secreting neurons. Inhibits TGFB-induced epithelial-to-mesenchymal transition in lens epithelial cells. The polypeptide is Interleukin-17 receptor D (IL17RD) (Homo sapiens (Human)).